A 732-amino-acid polypeptide reads, in one-letter code: MGITGLIPFVGKASSQLHLKDIRGSTVAVDTYCWLHKGVFGCAEKLARGEDTDVYIQYCLKYVNMLLSYDIKPILVFDGQHLPAKALTEKRRRDSRKQSKERAAELLRLGRIEEARSHMRRCVDVTHDMALRLIRECRSRNVDCIVAPYEADAQMAWLNRADVAQYIITEDSDLTLFGAKNIIFKLDLNGSGLLVEAEKLHLAMGCTEEKYHFDKFRRMCILSGCDYLDSLPGIGLAKACKFILKTEQEDMRIALKKIPSYLNMRNLEVDDDYIENFMKAEATFRHMFIYNPLERRMQRLCALEDYETDERYCSNAGTLLEDSEQALHLALGNLNPFSMKRLDSWTPEKAWPTPKNVKRSKHKSIWQTNFQSENTHTPKKENPCALFFKKVDFVGKTLNEEIEANQRLEQAKQTEAELFNMYSFKAKRRRSPSREDSVDQERTPPPSPVHKSRHNPFAKERTGEEANQRSPVVCENASLLRLLSPKKASPLDGEAGVKKVDSLKRSIFAKEQVQIRSRFFATQDEQTRLQREHLRDTENDDMDEQKLSSHSGHKKLRLVCKDIPGKNPIRQRCSSQISDGETDTDTTASSLLESQDKGVPSPLESQEDLNNSQPQIPTEGNTNSTTIRIKSLDLLLENSPEPTQESDRNNNDAIILLSDDSCSSDQRASSTSSSSQQRQNFLPTSKRRVGLSKPSTAKKGTPKSRTNGKLGAVSQNQTKLSMFGFQTKPVLK.

The segment at 1–99 (MGITGLIPFV…KRRRDSRKQS (99 aa)) is N-domain. Residues D30, D78, E150, D152, D171, D173, and D226 each coordinate Mg(2+). Positions 138–230 (RSRNVDCIVA…ILSGCDYLDS (93 aa)) are I-domain. Disordered regions lie at residues 422–471 (YSFK…QRSP), 524–625 (DEQT…TNST), and 661–716 (SCSS…VSQN). Phosphoserine occurs at positions 431 and 433. The segment covering 432-442 (PSREDSVDQER) has biased composition (basic and acidic residues). T443 carries the post-translational modification Phosphothreonine. Phosphoserine is present on S447. 2 stretches are compositionally biased toward basic and acidic residues: residues 457–467 (FAKERTGEEAN) and 525–537 (EQTRLQREHLRDT). 2 stretches are compositionally biased toward polar residues: residues 572–593 (RCSSQISDGETDTDTTASSLLE) and 608–625 (DLNNSQPQIPTEGNTNST). Low complexity predominate over residues 661-677 (SCSSDQRASSTSSSSQQ). A compositionally biased stretch (polar residues) spans 703-716 (KSRTNGKLGAVSQN).

It belongs to the XPG/RAD2 endonuclease family. EXO1 subfamily. Mg(2+) is required as a cofactor. Specifically expressed in the female germline.

Its subcellular location is the nucleus. In terms of biological role, 5'-&gt;3' double-stranded DNA exonuclease which may also contain a cryptic 3'-&gt;5' double-stranded DNA exonuclease activity. Also exhibits endonuclease activity against 5'-overhanging flap structures similar to those generated by displacement synthesis when DNA polymerase encounters the 5'-end of a downstream Okazaki fragment. Required for DNA mismatch repair (MMR). The protein is Exonuclease 1 (tos) of Drosophila melanogaster (Fruit fly).